The chain runs to 190 residues: MIAHSPSAPFPKLSPEEYLQWEERQREKHEYFDGQIYAMGGGSKNHSVISVRLSTLFCNHLDGGDCEIGNSDLKIQIVNTQNYTCPDVSVTCDPRDRKSTQFITYPCLVVEVLSPSTEAYDRGGKFRLYAHNPMLQDYLLVSSTSVEIDLYHKNDDGDWLILNYQASDRLELKSIGLSFAVDVIYRGLAF.

To Synechocystis PCC 6803 sll1609 and slr1290.

This is an uncharacterized protein from Synechocystis sp. (strain ATCC 27184 / PCC 6803 / Kazusa).